The following is a 288-amino-acid chain: Urease accessory protein UreD 1 (288 aa).

A compositionally biased stretch (pro residues) spans 1–10 (MHGPLAPAPS). Residues 1 to 35 (MHGPLAPAPSPERLGAAPARQRSDGRIRLRVGPAR) are disordered.

This sequence belongs to the UreD family. As to quaternary structure, ureD, UreF and UreG form a complex that acts as a GTP-hydrolysis-dependent molecular chaperone, activating the urease apoprotein by helping to assemble the nickel containing metallocenter of UreC. The UreE protein probably delivers the nickel.

The protein resides in the cytoplasm. Its function is as follows. Required for maturation of urease via the functional incorporation of the urease nickel metallocenter. In Methylobacterium radiotolerans (strain ATCC 27329 / DSM 1819 / JCM 2831 / NBRC 15690 / NCIMB 10815 / 0-1), this protein is Urease accessory protein UreD 1.